The sequence spans 156 residues: Small ribosomal subunit protein uS7 (156 aa).

This sequence belongs to the universal ribosomal protein uS7 family. Part of the 30S ribosomal subunit. Contacts proteins S9 and S11.

Functionally, one of the primary rRNA binding proteins, it binds directly to 16S rRNA where it nucleates assembly of the head domain of the 30S subunit. Is located at the subunit interface close to the decoding center, probably blocks exit of the E-site tRNA. This is Small ribosomal subunit protein uS7 from Arthrobacter sp. (strain FB24).